A 98-amino-acid chain; its full sequence is Large ribosomal subunit protein uL23 (98 aa).

It belongs to the universal ribosomal protein uL23 family. Part of the 50S ribosomal subunit. Contacts protein L29, and trigger factor when it is bound to the ribosome.

Its function is as follows. One of the early assembly proteins it binds 23S rRNA. One of the proteins that surrounds the polypeptide exit tunnel on the outside of the ribosome. Forms the main docking site for trigger factor binding to the ribosome. In Cellvibrio japonicus (strain Ueda107) (Pseudomonas fluorescens subsp. cellulosa), this protein is Large ribosomal subunit protein uL23.